The following is a 506-amino-acid chain: Probable Xaa-Pro aminopeptidase PADG_06815 (506 aa).

Asp285, Asp296, Glu433, and Glu471 together coordinate Mn(2+).

The protein belongs to the peptidase M24B family. It depends on Mn(2+) as a cofactor.

The catalysed reaction is Release of any N-terminal amino acid, including proline, that is linked to proline, even from a dipeptide or tripeptide.. In terms of biological role, catalyzes the removal of a penultimate prolyl residue from the N-termini of peptides. In Paracoccidioides brasiliensis (strain Pb18), this protein is Probable Xaa-Pro aminopeptidase PADG_06815.